Here is a 977-residue protein sequence, read N- to C-terminus: Vacuolar membrane protease (977 aa).

Residues M1–R17 are Cytoplasmic-facing. Residues V18 to V38 form a helical membrane-spanning segment. The Vacuolar portion of the chain corresponds to H39–L383. N-linked (GlcNAc...) asparagine glycans are attached at residues N113 and N116. Residues H166 and D178 each contribute to the Zn(2+) site. E212 functions as the Proton acceptor in the catalytic mechanism. Zn(2+) is bound by residues E213, E238, and H311. Residues F384 to I404 traverse the membrane as a helical segment. Topologically, residues L405–F438 are cytoplasmic. The helical transmembrane segment at P439 to I459 threads the bilayer. At N460–Y469 the chain is on the vacuolar side. The chain crosses the membrane as a helical span at residues A470 to A490. Residues N491–R500 lie on the Cytoplasmic side of the membrane. The helical transmembrane segment at I501–Y521 threads the bilayer. At E522–D525 the chain is on the vacuolar side. A helical membrane pass occupies residues G526–I546. At S547–W659 the chain is on the cytoplasmic side. A compositionally biased stretch (polar residues) spans G566–G576. Residues G566–L604 are disordered. A helical membrane pass occupies residues I660–L680. At I681–L696 the chain is on the vacuolar side. The helical transmembrane segment at V697–I717 threads the bilayer. Residues H718–T726 are Cytoplasmic-facing. A helical transmembrane segment spans residues F727–G747. Topologically, residues N748 to V977 are vacuolar. N749 and N791 each carry an N-linked (GlcNAc...) asparagine glycan.

The protein belongs to the peptidase M28 family. Zn(2+) is required as a cofactor.

It localises to the vacuole membrane. May be involved in vacuolar sorting and osmoregulation. This is Vacuolar membrane protease from Talaromyces marneffei (strain ATCC 18224 / CBS 334.59 / QM 7333) (Penicillium marneffei).